The sequence spans 444 residues: MSKTYHFIGIKGSGMSALALMLHQMGHKVQGSDVEKYYFTQRGLEQAGITILPFDEKNLDGDMEIIAGNAFRPDNNVEIAYADQNGISYKRYHEFLGSFMRDFVSMGVAGAHGKTSTTGMLSHVLSHITDTSFLIGDGTGRGSANAKYFVFESDEYERHFMPYHPEYSIITNIDFDHPDYFTSLEDVFNAFNDYAKQITKGLFVYGEDAELRKITSDAPIYYYGFEAEGNDFVASDLIRSTTGSTFTVHFRGQNLGQFHIPTFGRHNIMNATAVIGLLYTAGFDLNLVREHLKTFSGVKRRFTEKIVNDTVIIDDFAHHPTEIIATLDAARQKYPSKEIVAVFQPHTFTRTIALLDDFAHALNQADAVYLAQIYGSAREVDHGDVKVEDLANKINKKHQVITVENVSPLLDHDNAVYVFMGAGDIQTYEYSFERLLSNLTSNVQ.

110-116 (GAHGKTS) contacts ATP.

This sequence belongs to the MurCDEF family.

It is found in the cytoplasm. The catalysed reaction is UDP-N-acetyl-alpha-D-muramate + L-alanine + ATP = UDP-N-acetyl-alpha-D-muramoyl-L-alanine + ADP + phosphate + H(+). Its pathway is cell wall biogenesis; peptidoglycan biosynthesis. Its function is as follows. Cell wall formation. In Streptococcus pneumoniae (strain P1031), this protein is UDP-N-acetylmuramate--L-alanine ligase.